The primary structure comprises 314 residues: tRNA selenocysteine 1-associated protein 1 (314 aa).

2 RRM domains span residues 2–85 (NSLW…RSNY) and 94–173 (FSLF…LASS).

This sequence belongs to the RRM TRSPAP family.

The protein localises to the nucleus. The protein resides in the cytoplasm. Involved in the early steps of selenocysteine biosynthesis and tRNA(Sec) charging to the later steps resulting in the cotranslational incorporation of selenocysteine into selenoproteins. The protein is tRNA selenocysteine 1-associated protein 1 of Danio rerio (Zebrafish).